A 131-amino-acid polypeptide reads, in one-letter code: Glycine cleavage system H protein (131 aa).

Residues Thr24 to Arg106 enclose the Lipoyl-binding domain. Lys65 is modified (N6-lipoyllysine).

It belongs to the GcvH family. The glycine cleavage system is composed of four proteins: P, T, L and H. It depends on (R)-lipoate as a cofactor.

In terms of biological role, the glycine cleavage system catalyzes the degradation of glycine. The H protein shuttles the methylamine group of glycine from the P protein to the T protein. The chain is Glycine cleavage system H protein from Mycolicibacterium smegmatis (strain ATCC 700084 / mc(2)155) (Mycobacterium smegmatis).